Reading from the N-terminus, the 569-residue chain is MDTQRFVLFLIFATSLLFLWDAWQKEQYPATQGPKTAVQGTETQANTGTAGTAETPVPGDQLASSVPQRGSTAENGAPVRAAGKLESGDKITIKTDMVLAEIDTAGGDIRRLELLHQPSKEDKNKPFALLESDPERVYIAQSGLIGEGLPTHKTRFTAEPGAYELAAGQDKIQIRLSAPEVDGVQVTKIYTFHRGSYLIDVSFEVANQRNAAIQPFSYFQMLRDSRPPVGSFFMVPTYTGAALYTEEEKFRKIEFSALDKGNASYPKNADNGWIAMLQQYFLAAWLPKDKLPREYYAKRLGENEYTAGVIVPVGQIEPGSSATVTVPLYAGPEEQSKLASIAPGLDLVVDYGWLTVIGAPLFWLLSLFHSWTGNWGVAIILLTMSVKLAFFPLSAAGYRSMAKLRLVTPKLQRLREQHGNDRQRMHQAMMDFYKTEKINPMGGCLPILVQIPVFISLYWVLLSSVELRYASFALWIEDLSAPDPYYVLPVIMGISMFLQQRLSPPATDPIQARVMQIMPLAFSVFFFFFPAGLVLYSLVNNVLSIAQQWQITRMIEGSAANTSKQKKAN.

The chain crosses the membrane as a helical span at residues 6 to 26 (FVLFLIFATSLLFLWDAWQKE). 2 stretches are compositionally biased toward polar residues: residues 32–52 (QGPK…TAGT) and 62–74 (LASS…STAE). The interval 32–81 (QGPKTAVQGTETQANTGTAGTAETPVPGDQLASSVPQRGSTAENGAPVRA) is disordered. A run of 5 helical transmembrane segments spans residues 348-368 (VVDY…LSLF), 375-395 (WGVA…PLSA), 442-462 (GGCL…WVLL), 479-499 (LSAP…MFLQ), and 519-539 (PLAF…YSLV).

It belongs to the OXA1/ALB3/YidC family. Type 1 subfamily. As to quaternary structure, interacts with the Sec translocase complex via SecD. Specifically interacts with transmembrane segments of nascent integral membrane proteins during membrane integration.

The protein localises to the cell inner membrane. Required for the insertion and/or proper folding and/or complex formation of integral membrane proteins into the membrane. Involved in integration of membrane proteins that insert both dependently and independently of the Sec translocase complex, as well as at least some lipoproteins. Aids folding of multispanning membrane proteins. In Nitrosospira multiformis (strain ATCC 25196 / NCIMB 11849 / C 71), this protein is Membrane protein insertase YidC.